The sequence spans 367 residues: Alanine racemase (367 aa).

Lys34 acts as the Proton acceptor; specific for D-alanine in catalysis. Residue Lys34 is modified to N6-(pyridoxal phosphate)lysine. Residue Arg129 participates in substrate binding. Tyr251 serves as the catalytic Proton acceptor; specific for L-alanine. Residue Met299 coordinates substrate.

It belongs to the alanine racemase family. Pyridoxal 5'-phosphate is required as a cofactor.

The enzyme catalyses L-alanine = D-alanine. It participates in amino-acid biosynthesis; D-alanine biosynthesis; D-alanine from L-alanine: step 1/1. Its function is as follows. Catalyzes the interconversion of L-alanine and D-alanine. May also act on other amino acids. This chain is Alanine racemase (alr), found in Thiobacillus denitrificans (strain ATCC 25259 / T1).